Consider the following 279-residue polypeptide: Ribosomal RNA small subunit methyltransferase A (279 aa).

S-adenosyl-L-methionine-binding residues include asparagine 28, leucine 30, glycine 55, glutamate 77, aspartate 103, and asparagine 122.

The protein belongs to the class I-like SAM-binding methyltransferase superfamily. rRNA adenine N(6)-methyltransferase family. RsmA subfamily.

It is found in the cytoplasm. The catalysed reaction is adenosine(1518)/adenosine(1519) in 16S rRNA + 4 S-adenosyl-L-methionine = N(6)-dimethyladenosine(1518)/N(6)-dimethyladenosine(1519) in 16S rRNA + 4 S-adenosyl-L-homocysteine + 4 H(+). Functionally, specifically dimethylates two adjacent adenosines (A1518 and A1519) in the loop of a conserved hairpin near the 3'-end of 16S rRNA in the 30S particle. May play a critical role in biogenesis of 30S subunits. This is Ribosomal RNA small subunit methyltransferase A from Ruegeria pomeroyi (strain ATCC 700808 / DSM 15171 / DSS-3) (Silicibacter pomeroyi).